A 360-amino-acid polypeptide reads, in one-letter code: Venom serine protease Bi-VSP (360 aa).

A signal peptide spans 1 to 26 (MTGSKMLFACLALIAFLHPLVHVASA). Positions 27–113 (QECTTPNNKA…CGFSNVSHTR (87 aa)) are excised as a propeptide. Residues 28–79 (ECTTPNNKAGKCLGIRVCKPLLEMLQTQGHAAADFLRQSVCKYENNNPIVCC) enclose the Clip domain. 7 cysteine pairs are disulfide-bonded: cysteine 29-cysteine 78, cysteine 39-cysteine 68, cysteine 45-cysteine 79, cysteine 104-cysteine 230, cysteine 147-cysteine 163, cysteine 278-cysteine 296, and cysteine 307-cysteine 335. N-linked (GlcNAc...) asparagine glycosylation is present at asparagine 108. One can recognise a Peptidase S1 domain in the interval 114 to 360 (VVGGKPAVLG…LDDFILPAMQ (247 aa)). The active-site Charge relay system is histidine 162. The Ca(2+) site is built by aspartate 176, asparagine 178, arginine 181, and aspartate 184. Catalysis depends on aspartate 210, which acts as the Charge relay system. The active-site Charge relay system is the serine 311.

This sequence belongs to the peptidase S1 family. CLIP subfamily. As to expression, expressed by the venom gland.

Its subcellular location is the secreted. Multifunctional venom serine protease. In insects, it acts as an arthropod prophenoloxidase-activating factor, thereby triggering the phenoloxidase cascade. When injected into larvae, it induces a lethal melanization response in target insects by modulating the innate immune response. In mammals, it converts fibrinogen into fibrin, activates prothrombin, and also degrades fibrin. In mammal, it may act in a cooperative manner with the serine protease inhibitor Bi-KTI (AC G3LH89) to promote the spread of bee venom under anti-bleeding conditions. The sequence is that of Venom serine protease Bi-VSP from Bombus ignitus (Bumblebee).